The chain runs to 308 residues: Elongation factor Ts (308 aa).

Positions 80–83 are involved in Mg(2+) ion dislocation from EF-Tu; sequence TDFV.

The protein belongs to the EF-Ts family.

Its subcellular location is the cytoplasm. Its function is as follows. Associates with the EF-Tu.GDP complex and induces the exchange of GDP to GTP. It remains bound to the aminoacyl-tRNA.EF-Tu.GTP complex up to the GTP hydrolysis stage on the ribosome. In Sphingopyxis alaskensis (strain DSM 13593 / LMG 18877 / RB2256) (Sphingomonas alaskensis), this protein is Elongation factor Ts.